Consider the following 297-residue polypeptide: N-acetylmuramoyl-L-alanine amidase XlyA (297 aa).

The N-terminal stretch at 1 to 44 (MVNIIQDFIPVGANNRPGYAMTPLYITVHNTANTAVGADAAAHA) is a signal peptide. Residues 45-140 (RYLKNPDTTT…KYWSGKECPR (96 aa)) enclose the N-acetylmuramoyl-L-alanine amidase domain. In terms of domain architecture, LysM spans 159–203 (QTYVVKQGDTLTSIARAFGVTVAQLQEWNNIEDPNLIRVGQVLIV).

Belongs to the N-acetylmuramoyl-L-alanine amidase 2 family.

The protein localises to the secreted. It carries out the reaction Hydrolyzes the link between N-acetylmuramoyl residues and L-amino acid residues in certain cell-wall glycopeptides.. Functionally, autolysins are involved in some important biological processes such as cell separation, cell-wall turnover, competence for genetic transformation, formation of the flagella and sporulation. The chain is N-acetylmuramoyl-L-alanine amidase XlyA (xlyA) from Bacillus subtilis (strain 168).